The sequence spans 502 residues: Protein Dok-7 (502 aa).

One can recognise a PH domain in the interval 4-109 (SVVVEGYARL…WDARLRYSLG (106 aa)). An IRS-type PTB domain is found at 105–210 (RYSLGEVHRF…RGISPTRGPF (106 aa)). 4 disordered regions span residues 210–232 (FGLRPVLPDPSTSETSSEERLNH), 249–279 (STASYCPSAGGDDRSISGSSDTSDTSHSDCS), 291–358 (TSIQ…GSFS), and 418–482 (EVGG…GHPG). Composition is skewed to low complexity over residues 264 to 279 (ISGSSDTSDTSHSDCS) and 301 to 316 (AGAKAAAQSAEKPLPS). The segment covering 336 to 346 (GRQSSSDSGIA) has biased composition (polar residues). Low complexity predominate over residues 347–358 (TGSHSSYSGSFS). Residues 459 to 473 (PNEHFRSPSESKKSS) show a composition bias toward basic and acidic residues.

It localises to the cell membrane. The protein resides in the synapse. Probable muscle-intrinsic activator of MUSK that plays an essential role in neuromuscular synaptogenesis. Acts in aneural activation of MUSK and subsequent acetylcholine receptor (AchR) clustering in myotubes. This chain is Protein Dok-7 (dok7), found in Takifugu rubripes (Japanese pufferfish).